The following is a 296-amino-acid chain: Complex I intermediate-associated protein 30, mitochondrial (296 aa).

Residues 1-29 constitute a mitochondrion transit peptide; the sequence is MNSLLRQGLRLGCCLPAVQQQIHTTAVHR.

It belongs to the CIA30 family. In terms of assembly, associates with mitochondrial complex I assembly intermediates during its biogenesis.

It is found in the mitochondrion. Functionally, chaperone protein involved in the assembly of the mitochondrial NADH:ubiquinone oxidoreductase complex (complex I). The chain is Complex I intermediate-associated protein 30, mitochondrial from Drosophila melanogaster (Fruit fly).